We begin with the raw amino-acid sequence, 101 residues long: UPF0473 protein spr0177 (101 aa).

The protein belongs to the UPF0473 family.

In Streptococcus pneumoniae (strain ATCC BAA-255 / R6), this protein is UPF0473 protein spr0177.